The chain runs to 258 residues: Isoprenyl transferase 1 (258 aa).

Asp-39 is a catalytic residue. Asp-39 contacts Mg(2+). Substrate contacts are provided by residues 40-43, Trp-44, Arg-52, His-57, and 85-87; these read GNRR and SND. The Proton acceptor role is filled by Asn-88. Substrate-binding positions include Arg-92, Arg-207, and 213–215; that span reads RLS. Glu-226 contacts Mg(2+).

This sequence belongs to the UPP synthase family. In terms of assembly, homodimer. It depends on Mg(2+) as a cofactor.

Functionally, catalyzes the condensation of isopentenyl diphosphate (IPP) with allylic pyrophosphates generating different type of terpenoids. The protein is Isoprenyl transferase 1 of Tropheryma whipplei (strain TW08/27) (Whipple's bacillus).